A 199-amino-acid chain; its full sequence is Ribosome maturation factor RimP (199 aa).

The interval 165 to 199 (AGNLPPQPEDDEDMLADFEIDESEDEEDPETGDVQ) is disordered. The span at 172 to 199 (PEDDEDMLADFEIDESEDEEDPETGDVQ) shows a compositional bias: acidic residues.

Belongs to the RimP family.

It localises to the cytoplasm. In terms of biological role, required for maturation of 30S ribosomal subunits. This is Ribosome maturation factor RimP from Hyphomonas neptunium (strain ATCC 15444).